The sequence spans 488 residues: Receptor-like tyrosine-protein kinase kin-15 (488 aa).

A signal peptide spans 1-26 (MCLKMRYERIKYILLFSLMHLVYSNS). A glycan (N-linked (GlcNAc...) asparagine) is linked at asparagine 25. Residues 27–50 (TFESFTENPHISSQISNVLYMDQM) lie on the Extracellular side of the membrane. The chain crosses the membrane as a helical span at residues 51 to 70 (FIIYILICILLILISVIVYL). The Cytoplasmic segment spans residues 71 to 488 (SKRYSQQMMQ…SKLEDWIRRD (418 aa)). In terms of domain architecture, Protein kinase spans 144 to 458 (EISEDKLGSG…VEFFEEHLSV (315 aa)). Residues 150-158 (LGSGFFGEV) and lysine 183 each bind ATP. Residue aspartate 319 is the Proton acceptor of the active site.

The protein belongs to the protein kinase superfamily. Tyr protein kinase family. Hypodermal cells.

Its subcellular location is the cell membrane. It carries out the reaction L-tyrosyl-[protein] + ATP = O-phospho-L-tyrosyl-[protein] + ADP + H(+). In terms of biological role, may be specifically involved in cell-cell interactions regulating cell fusions that generate the hypodermis during postembryonic development. It has a role in the development of the HYP7 hypodermal syncytium. This chain is Receptor-like tyrosine-protein kinase kin-15 (kin-15), found in Caenorhabditis elegans.